Consider the following 678-residue polypeptide: Penicillin-binding protein activator LpoA (678 aa).

The signal sequence occupies residues 1 to 26; it reads MVPSTFSRLKAARCLPVVLAALIFAG. Cys-27 carries the N-palmitoyl cysteine lipid modification. Cys-27 is lipidated: S-diacylglycerol cysteine. Positions 300–310 are enriched in low complexity; it reads AADVAEQPQPQ. Disordered stretches follow at residues 300-340 and 496-528; these read AADV…PVSA and ALTG…DDQF. Residues 311-327 are compositionally biased toward polar residues; it reads TADSVASPAQASVSDLT. 2 stretches are compositionally biased toward low complexity: residues 330–340 and 513–528; these read QPAAQPVPVSA and TTNN…DDQF.

The protein belongs to the LpoA family. Interacts with PBP1a.

The protein resides in the cell outer membrane. Its function is as follows. Regulator of peptidoglycan synthesis that is essential for the function of penicillin-binding protein 1A (PBP1a). The polypeptide is Penicillin-binding protein activator LpoA (Shigella flexneri serotype X (strain 2002017)).